Reading from the N-terminus, the 283-residue chain is Pantothenate synthetase (283 aa).

Residue 30–37 (MGALHEGH) coordinates ATP. The Proton donor role is filled by histidine 37. Residue glutamine 61 participates in (R)-pantoate binding. Residue glutamine 61 participates in beta-alanine binding. Residue 147-150 (GEKD) coordinates ATP. Glutamine 153 is a binding site for (R)-pantoate. ATP contacts are provided by residues valine 176 and 184 to 187 (VSSR).

It belongs to the pantothenate synthetase family. Homodimer.

The protein resides in the cytoplasm. The catalysed reaction is (R)-pantoate + beta-alanine + ATP = (R)-pantothenate + AMP + diphosphate + H(+). It functions in the pathway cofactor biosynthesis; (R)-pantothenate biosynthesis; (R)-pantothenate from (R)-pantoate and beta-alanine: step 1/1. Functionally, catalyzes the condensation of pantoate with beta-alanine in an ATP-dependent reaction via a pantoyl-adenylate intermediate. This is Pantothenate synthetase from Chlorobium limicola (strain DSM 245 / NBRC 103803 / 6330).